A 970-amino-acid chain; its full sequence is Sodium/calcium exchanger 1 (970 aa).

The signal sequence occupies residues 1–32; it reads MLRLSLSPTYSLGFHLLAMMTLLISHVDHITA. The Extracellular segment spans residues 33–71; that stretch reads ETEMVEEGNETGECTGSYYCKKGVILPIWEPQDPSFGDK. An N-linked (GlcNAc...) asparagine glycan is attached at Asn41. A helical membrane pass occupies residues 72–92; sequence IARATVYFVAMVYMFLGVSII. Over 93-133 the chain is Cytoplasmic; the sequence is ADRFMSSIEVITSQEKEITIKKPNGETTKTTVRIWNETVSN. The helical transmembrane segment at 134–154 threads the bilayer; that stretch reads LTLMALGSSAPEILLSVIEVC. One copy of the Alpha-1 repeat lies at 138-178; the sequence is ALGSSAPEILLSVIEVCGHNFTAGDLGPSTIVGSAAFNMFI. Topologically, residues 155-167 are extracellular; sequence GHNFTAGDLGPST. Asn157 carries N-linked (GlcNAc...) asparagine glycosylation. Residues 168–188 traverse the membrane as a helical segment; sequence IVGSAAFNMFIIIALCVYVVP. Over 189-201 the chain is Cytoplasmic; that stretch reads DGETRKIKHLRVF. A helical membrane pass occupies residues 202–222; that stretch reads FVTAAWSIFAYTWLYIILSVI. Over 223 to 228 the chain is Extracellular; sequence SPGVVE. A helical transmembrane segment spans residues 229 to 249; that stretch reads VWEGLLTFFFFPICVVFAWVA. At 250–797 the chain is on the cytoplasmic side; sequence DRRLLFYKYV…FVPPTEYWNG (548 aa). A putative calmodulin-binding region region spans residues 251–270; that stretch reads RRLLFYKYVYKRYRAGKQRG. Phosphoserine occurs at positions 282 and 389. Calx-beta domains lie at 393-493 and 524-624; these read VNTE…VHLS and ATVT…LEIG. Ca(2+) is bound by residues Glu417, Asp453, Asp478, Asp479, Ile481, Glu483, Glu486, Asp530, Asp531, Asp532, Glu548, Asp584, Asp610, Glu611, Glu612, and Glu715. A helical transmembrane segment spans residues 798–818; sequence WACFIVSILMIGLLTAFIGDL. Topologically, residues 819–821 are extracellular; the sequence is ASH. The chain crosses the membrane as a helical span at residues 822-842; it reads FGCTIGLKDSVTAVVFVALGT. One copy of the Alpha-2 repeat lies at 839 to 875; sequence ALGTSVPDTFASKVAATQDQYADASIGNVTGSNAVNV. Residues 843 to 871 lie on the Cytoplasmic side of the membrane; sequence SVPDTFASKVAATQDQYADASIGNVTGSN. A helical membrane pass occupies residues 872–892; it reads AVNVFLGIGVAWSIAAIYHAA. At 893–903 the chain is on the extracellular side; the sequence is NGEQFKVSPGT. Residues 904–924 traverse the membrane as a helical segment; the sequence is LAFSVTLFTIFAFINVGVLLY. Residues 925 to 941 lie on the Cytoplasmic side of the membrane; the sequence is RRRPEIGGELGGPRTAK. A helical membrane pass occupies residues 942-962; it reads LLTSCLFVLLWLLYIFFSSLE. Residues 963 to 970 lie on the Extracellular side of the membrane; it reads AYCHIKGF.

This sequence belongs to the Ca(2+):cation antiporter (CaCA) (TC 2.A.19) family. SLC8 subfamily.

The protein resides in the cell membrane. The catalysed reaction is Ca(2+)(in) + 3 Na(+)(out) = Ca(2+)(out) + 3 Na(+)(in). Activated by micromolar levels of Ca(2+). Functionally, mediates the exchange of one Ca(2+) ion against three to four Na(+) ions across the cell membrane, and thereby contributes to the regulation of cytoplasmic Ca(2+) levels and Ca(2+)-dependent cellular processes. Contributes to Ca(2+) transport during excitation-contraction coupling in muscle. In a first phase, voltage-gated channels mediate the rapid increase of cytoplasmic Ca(2+) levels due to release of Ca(2+) stores from the endoplasmic reticulum. SLC8A1 mediates the export of Ca(2+) from the cell during the next phase, so that cytoplasmic Ca(2+) levels rapidly return to baseline. Required for normal embryonic heart development and the onset of heart contractions. This chain is Sodium/calcium exchanger 1 (SLC8A1), found in Cavia porcellus (Guinea pig).